Here is an 829-residue protein sequence, read N- to C-terminus: MGLPRGPLASLLLLQVCWLQCAASEPCRAVFREAEVTLEAGGAEQEPGQALGKVFMGCPGQEPALFSTDNDDFTVRNGETVQERRSLKERNPLKIFPSKRILRRHKRDWVVAPISVPENGKGPFPQRLNQLKSNKDRDTKIFYSITGPGADSPPEGVFAVEKETGWLLLNKPLDREEIAKYELFGHAVSENGASVEDPMNISIIVTDQNDHKPKFTQDTFRGSVLEGVLPGTSVMQVTATDEDDAIYTYNGVVAYSIHSQEPKDPHDLMFTIHRSTGTISVISSGLDREKVPEYTLTIQATDMDGDGSTTTAVAVVEILDANDNAPMFDPQKYEAHVPENAVGHEVQRLTVTDLDAPNSPAWRATYLIMGGDDGDHFTITTHPESNQGILTTRKGLDFEAKNQHTLYVEVTNEAPFVLKLPTSTATIVVHVEDVNEAPVFVPPSKVVEVQEGIPTGEPVCVYTAEDPDKENQKISYRILRDPAGWLAMDPDSGQVTAVGTLDREDEQFVRNNIYEVMVLAMDNGSPPTTGTGTLLLTLIDVNDHGPVPEPRQITICNQSPVRQVLNITDKDLSPHTSPFQAQLTDDSDIYWTAEVNEEGDTVVLSLKKFLKQDTYDVHLSLSDHGNKEQLTVIRATVCDCHGHVETCPGPWKGGFILPVLGAVLALLFLLLVLLLLVRKKRKIKEPLLLPEDDTRDNVFYYGEEGGGEEDQDYDITQLHRGLEARPEVVLRNDVAPTIIPTPMYRPRPANPDEIGNFIIENLKAANTDPTAPPYDTLLVFDYEGSGSDAASLSSLTSSASDQDQDYDYLNEWGSRFKKLADMYGGGEDD.

Residues 1 to 24 (MGLPRGPLASLLLLQVCWLQCAAS) form the signal peptide. Positions 25–107 (EPCRAVFREA…SKRILRRHKR (83 aa)) are excised as a propeptide. 5 consecutive Cadherin domains span residues 108 to 215 (DWVV…KPKF), 216 to 328 (TQDT…APMF), 329 to 440 (DPQK…APVF), 441 to 546 (VPPS…DHGP), and 547 to 650 (VPEP…CPGP). Residues 108-654 (DWVVAPISVP…ETCPGPWKGG (547 aa)) lie on the Extracellular side of the membrane. N200 is a glycosylation site (N-linked (GlcNAc...) asparagine). N566 carries an N-linked (GlcNAc...) asparagine glycan. Residues 655 to 677 (FILPVLGAVLALLFLLLVLLLLV) traverse the membrane as a helical segment. Topologically, residues 678-829 (RKKRKIKEPL…ADMYGGGEDD (152 aa)) are cytoplasmic.

In terms of assembly, interacts with CDCP1 and CTNNB1. Expressed in some normal epithelial tissues and in some carcinoma cell lines.

It localises to the cell membrane. Cadherins are calcium-dependent cell adhesion proteins. They preferentially interact with themselves in a homophilic manner in connecting cells; cadherins may thus contribute to the sorting of heterogeneous cell types. The sequence is that of Cadherin-3 (CDH3) from Homo sapiens (Human).